Here is a 311-residue protein sequence, read N- to C-terminus: L-lactate dehydrogenase (311 aa).

NAD(+) is bound by residues V12, D33, K38, Y63, and 77 to 78; that span reads GA. Substrate contacts are provided by Q80 and R86. Residues S99, 116 to 118, and S141 each bind NAD(+); that span reads VTN. 118-121 contributes to the substrate binding site; the sequence is NPVD. 146–149 serves as a coordination point for substrate; sequence DSSR. The beta-D-fructose 1,6-bisphosphate site is built by R151 and H166. Residue H173 is the Proton acceptor of the active site. Position 219 is a phosphotyrosine (Y219). Residue T228 coordinates substrate.

Belongs to the LDH/MDH superfamily. LDH family. As to quaternary structure, homotetramer.

It is found in the cytoplasm. The catalysed reaction is (S)-lactate + NAD(+) = pyruvate + NADH + H(+). The protein operates within fermentation; pyruvate fermentation to lactate; (S)-lactate from pyruvate: step 1/1. With respect to regulation, allosterically activated by fructose 1,6-bisphosphate (FBP). Its function is as follows. Catalyzes the conversion of lactate to pyruvate. The polypeptide is L-lactate dehydrogenase (Thermoanaerobacterium saccharolyticum (strain DSM 8691 / JW/SL-YS485)).